A 4043-amino-acid polypeptide reads, in one-letter code: Hybrid PKS-NRPS synthetase thnA (4043 aa).

Residues 6-440 (LEPIAIVGSA…GSNAHAILEE (435 aa)) enclose the Ketosynthase family 3 (KS3) domain. Catalysis depends on for beta-ketoacyl synthase activity residues C179, H319, and H360. Positions 558–894 (VFTGQGAQWA…FSDALGFVWT (337 aa)) are malonyl-CoA:ACP transacylase (MAT) domain. The segment at 952–1090 (HEILGTILPE…ATVKIILGTP (139 aa)) is N-terminal hotdog fold. Residues 952–1256 (HEILGTILPE…LSIKTFAPAT (305 aa)) are dehydratase (DH) domain. Residues 952–1258 (HEILGTILPE…IKTFAPATQA (307 aa)) enclose the PKS/mFAS DH domain. Catalysis depends on H984, which acts as the Proton acceptor; for dehydratase activity. Positions 1105 to 1258 (LFPIDADRFY…IKTFAPATQA (154 aa)) are C-terminal hotdog fold. D1166 acts as the Proton donor; for dehydratase activity in catalysis. A methyltransferase (MT) domain region spans residues 1417–1591 (LASMMKQITH…RKAGFAGVDA (175 aa)). The ketoreductase (KR) domain stretch occupies residues 2146–2320 (TYLLVGLTGK…GSTFDIGQVA (175 aa)). The region spanning 2434 to 2512 (EQALDILKEC…ELCDRVVDKL (79 aa)) is the Carrier 1 domain. Position 2472 is an O-(pantetheine 4'-phosphoryl)serine (S2472). A disordered region spans residues 2521–2618 (GKQGESQPPA…PPPPEPAVER (98 aa)). The span at 2527–2536 (QPPASTAQPQ) shows a compositional bias: low complexity. Over residues 2537-2547 (PVAPKPKPLPV) the composition is skewed to pro residues. The segment covering 2578 to 2605 (YSATEASTRSGSPSEATRLSQKVSSKLQ) has biased composition (polar residues). The condensation (C) domain stretch occupies residues 2626-3067 (IKSVPISLGQ…IPRFSEKQLA (442 aa)). An adenylation (A) domain region spans residues 3092-3496 (QVARENPDKV…GTMVFHSRMA (405 aa)). Residues 3614–3695 (TELTETMIQL…EMAQKVEETI (82 aa)) enclose the Carrier 2 domain. S3655 carries the post-translational modification O-(pantetheine 4'-phosphoryl)serine. A reductase (R) domain region spans residues 3736–3954 (ITGATGFLSK…DMLPAVLTAQ (219 aa)).

It in the C-terminal section; belongs to the NRP synthetase family.

The catalysed reaction is malate + 6 malonyl-CoA + acetyl-CoA + 2 AH2 + 2 S-adenosyl-L-methionine + 5 NADPH + 9 H(+) = trihazone A + 2 A + 2 S-adenosyl-L-homocysteine + 6 CO2 + 5 NADP(+) + 7 CoA + 6 H2O. It functions in the pathway secondary metabolite biosynthesis. Its function is as follows. Hybrid PKS-NRPS synthetase; part of the gene cluster that produces the tetronate natural products trihazones. The PKS-NRPS synthetase thnA with the help of the trans-enoyl reductase thnE are responsible for the synthesis of the carboxylmethyl containing trihazone A. The PKS portion of thnA synthesizes beta-keto-triene chain from one acetyl-CoA and 6 equivalents of malonyl-CoA, in collaboration with thnE, which selectively reduces the enoyl intermediate during the first and fourth iteration of the PKS. The NRPS domain selects and activates malate, of which the alpha-hydroxyl group attacks the completed polyketide acyl-S-ACP chain to form the ester product. Intramolecular Dieckmann cyclization catalyzed by the terminal reductase domain releases the product as trihazone A from the PKS-NPRS. The pathway begins with the formation of trihazone A by the hybrid PKS-NRPS synthetase thnA and the trans-enoyl reductase thnE. Trihazone A is further decarboxylated by the 2-oxoglutarate-dependent dioxygenase thnC to produce trihazone D. The function of the FAD-dependent monooxygenase thnD has still to be identified. The chain is Hybrid PKS-NRPS synthetase thnA from Trichoderma harzianum (Hypocrea lixii).